We begin with the raw amino-acid sequence, 967 residues long: RNA polymerase-associated protein RapA (967 aa).

The Helicase ATP-binding domain occupies 163–332 (EVGRRHAPRV…FARLRLLDPD (170 aa)). 176–183 (DEVGLGKT) contributes to the ATP binding site. Residues 278–281 (DEAH) carry the DEAH box motif. The Helicase C-terminal domain occupies 491 to 639 (RVDWLIDFLK…LCAFELTCPG (149 aa)).

The protein belongs to the SNF2/RAD54 helicase family. RapA subfamily. As to quaternary structure, interacts with the RNAP. Has a higher affinity for the core RNAP than for the holoenzyme. Its ATPase activity is stimulated by binding to RNAP.

In terms of biological role, transcription regulator that activates transcription by stimulating RNA polymerase (RNAP) recycling in case of stress conditions such as supercoiled DNA or high salt concentrations. Probably acts by releasing the RNAP, when it is trapped or immobilized on tightly supercoiled DNA. Does not activate transcription on linear DNA. Probably not involved in DNA repair. The protein is RNA polymerase-associated protein RapA of Shewanella amazonensis (strain ATCC BAA-1098 / SB2B).